Consider the following 220-residue polypeptide: MAKQEYKQLPKRAEVHSATEQFKDTIKTSLGLDLFKGLGLTIKEFFSPSVTIHYPMEQLPLSPRYRAVHNLQRLLDSGSERCIGCGLCEKICTSNCIRIITHKGEDNRKKIDSYTINLGRCIYCGLCAEVCPELAIVMGNRFENASTQRSQYGSKSEFLTSEQDAKNCSHAEFLGFGAVSPNYNERMQATPLDYVQEPSKEESKEETPTNPESNKGDENV.

2 consecutive 4Fe-4S ferredoxin-type domains span residues 71–102 and 112–141; these read LQRLLDSGSERCIGCGLCEKICTSNCIRIITH and DSYTINLGRCIYCGLCAEVCPELAIVMGNR. C82, C85, C88, C92, C121, C124, C127, and C131 together coordinate [4Fe-4S] cluster. Residues 187–220 are disordered; sequence MQATPLDYVQEPSKEESKEETPTNPESNKGDENV. Residues 198–207 show a composition bias toward basic and acidic residues; it reads PSKEESKEET.

This sequence belongs to the complex I 23 kDa subunit family. As to quaternary structure, NDH-1 is composed of 14 different subunits. Subunits NuoA, H, J, K, L, M, N constitute the membrane sector of the complex. [4Fe-4S] cluster is required as a cofactor.

Its subcellular location is the cell inner membrane. It catalyses the reaction a quinone + NADH + 5 H(+)(in) = a quinol + NAD(+) + 4 H(+)(out). Functionally, NDH-1 shuttles electrons from NADH, via FMN and iron-sulfur (Fe-S) centers, to quinones in the respiratory chain. The immediate electron acceptor for the enzyme in this species is believed to be ubiquinone. Couples the redox reaction to proton translocation (for every two electrons transferred, four hydrogen ions are translocated across the cytoplasmic membrane), and thus conserves the redox energy in a proton gradient. The sequence is that of NADH-quinone oxidoreductase subunit I from Helicobacter pylori (strain Shi470).